The following is a 202-amino-acid chain: Secreted RxLR effector protein 11 (202 aa).

Residues 1–23 form the signal peptide; that stretch reads MRLNFTKLFAGAVALAWTTESMA. The short motif at 49–61 is the RxLR-dEER element; that stretch reads RRLRTINGADEER.

It belongs to the RxLR effector family.

It is found in the secreted. Its subcellular location is the host cytoplasm. The protein resides in the host nucleus. Its function is as follows. Effector that acts as a broad suppressor of cell death to interrupt plant immunity. Inhibits cell death induced by cell death-inducing proteins, including the PAMP elicitor INF1 from P.infestans. This chain is Secreted RxLR effector protein 11, found in Plasmopara viticola (Downy mildew of grapevine).